The chain runs to 252 residues: MTPLCPRPALCYHFLTSLLRSAMQNARGARQRAEAAVLSGPGPPLGRAAQHGIPRPLSSAGRLSQGCRGASTVGAAGWKGELPKAGGSPAPGPETPAISPSKRARPAEVGGMQLRFARLSEHATAPTRGSARAAGYDLYSAYDYTIPPMEKAVVKTDIQIALPSGCYGRVAPRSGLAAKHFIDVGAGVIDEDYRGNVGVVLFNFGKEKFEVKKGDRIAQLICERIFYPEIEEVQALDDTERGSGGFGSTGKN.

The transit peptide at 1–69 (MTPLCPRPAL…AGRLSQGCRG (69 aa)) directs the protein to the mitochondrion. Residues cysteine 11, serine 88, and serine 99 each carry the phosphoserine modification. The segment at 78-104 (WKGELPKAGGSPAPGPETPAISPSKRA) is disordered. DUTP is bound by residues 173–175 (RSG), 187–193 (GVIDEDY), glycine 198, arginine 241, and 246–247 (FG).

The protein belongs to the dUTPase family. Homotrimer. The cofactor is Mg(2+). Nuclear isoform 2 is phosphorylated in vivo on Ser-11, a reaction that can be catalyzed in vitro by CDC2. Phosphorylation in mature T-cells occurs in a cell cycle-dependent manner. Isoform 3 is not phosphorylated. As to expression, found in a variety of tissues. Isoform 3 expression is constitutive, while isoform 2 expression correlates with the onset of DNA replication (at protein level). Isoform 2 degradation coincides with the cessation of nuclear DNA replication (at protein level).

The protein localises to the nucleus. The protein resides in the mitochondrion. It catalyses the reaction dUTP + H2O = dUMP + diphosphate + H(+). Its pathway is pyrimidine metabolism; dUMP biosynthesis; dUMP from dCTP (dUTP route): step 2/2. Its activity is regulated as follows. Phosphorylation is necessary for activity. Functionally, catalyzes the cleavage of 2'-deoxyuridine 5'-triphosphate (dUTP) into 2'-deoxyuridine 5'-monophosphate (dUMP) and inorganic pyrophosphate and through its action efficiently prevents uracil misincorporation into DNA and at the same time provides dUMP, the substrate for de novo thymidylate biosynthesis. Inhibits peroxisome proliferator-activated receptor (PPAR) activity by binding of its N-terminal to PPAR, preventing the latter's dimerization with retinoid X receptor. Essential for embryonic development. In Homo sapiens (Human), this protein is Deoxyuridine 5'-triphosphate nucleotidohydrolase, mitochondrial (DUT).